Here is a 231-residue protein sequence, read N- to C-terminus: Response regulator MprA (231 aa).

Residues 4-118 (RILVVDDDRA…ELLARMRALL (115 aa)) enclose the Response regulatory domain. Position 48 is a 4-aspartylphosphate (aspartate 48). The segment at residues 130–228 (SAAMTFSDLS…VRGVGYVLRE (99 aa)) is a DNA-binding region (ompR/PhoB-type).

Phosphorylated and dephosphorylated by MprB.

It localises to the cytoplasm. Member of the two-component regulatory system MprB/MprA which contributes to maintaining a balance among several systems involved in stress resistance and is required for establishment and maintenance of persistent infection in the host. Functions as a transcriptional regulator that recognizes a 19-bp nucleotide motif comprizing two loosely conserved 8-bp direct DNA-binding motif repeats separated by a 3-bp spacer region. This is Response regulator MprA (mprA) from Mycolicibacterium vanbaalenii (strain DSM 7251 / JCM 13017 / BCRC 16820 / KCTC 9966 / NRRL B-24157 / PYR-1) (Mycobacterium vanbaalenii).